We begin with the raw amino-acid sequence, 65 residues long: uncharacterized protein (65 aa).

Positions 1 to 65 (MIALSVCWQI…ETGIGYRFML (65 aa)) form a DNA-binding region, ompR/PhoB-type.

This is an uncharacterized protein from Escherichia coli (strain K12).